The following is a 167-amino-acid chain: Endoribonuclease YbeY (167 aa).

3 residues coordinate Zn(2+): His-131, His-135, and His-141.

Belongs to the endoribonuclease YbeY family. Zn(2+) serves as cofactor.

Its subcellular location is the cytoplasm. Its function is as follows. Single strand-specific metallo-endoribonuclease involved in late-stage 70S ribosome quality control and in maturation of the 3' terminus of the 16S rRNA. The polypeptide is Endoribonuclease YbeY (Rickettsia prowazekii (strain Madrid E)).